The chain runs to 432 residues: MQLLTIGINHHTAPVALRERVAFPLEQIKPALVTFKNVFLGPQAPNTPEAAILSTCNRTELYCATDDRAAREGAVRWLSEYHRIPVDELAPHVYALPQSEAVRHAFRVASGLDSMVLGETQILGQMKDAVRTATEAGALGTYLNQLFQRTFAVAKEVRGTTEIGTQSVSMAAAAVRLAQRIFEKVSDQRVLFIGAGEMIELCATHFAAQGPRELVVANRTAERGQRLAERFNGRAMPLADLPTRMHEFDIIVSCTASTLPIIGLGAVERAVKARRHRPIFMVDLAVPRDIEPEVGKLKDVFLYTVDDLGAIVREGNASRQAAVAQAEAIIETRVQNFMQWLDTRSVVPVIRHMHTQADALRRAEVDKAQKLLARGDDPAAVLEALSQALTNKLIHGPTSALNRVNGADRDSLIDLMRGFYQHAPRSNDQSGH.

Residues T55–R58, S114, E119–Q121, and Q125 each bind substrate. C56 serves as the catalytic Nucleophile. NADP(+) is bound at residue G194–I199.

It belongs to the glutamyl-tRNA reductase family. In terms of assembly, homodimer.

The catalysed reaction is (S)-4-amino-5-oxopentanoate + tRNA(Glu) + NADP(+) = L-glutamyl-tRNA(Glu) + NADPH + H(+). The protein operates within porphyrin-containing compound metabolism; protoporphyrin-IX biosynthesis; 5-aminolevulinate from L-glutamyl-tRNA(Glu): step 1/2. In terms of biological role, catalyzes the NADPH-dependent reduction of glutamyl-tRNA(Glu) to glutamate 1-semialdehyde (GSA). The polypeptide is Glutamyl-tRNA reductase (Burkholderia lata (strain ATCC 17760 / DSM 23089 / LMG 22485 / NCIMB 9086 / R18194 / 383)).